The sequence spans 400 residues: Leukosialin (400 aa).

Positions M1–G19 are cleaved as a signal peptide. Topologically, residues S20 to R253 are extracellular. Residues T21, T22, T26, and T28 are each glycosylated (O-linked (GalNAc...) threonine). Polar residues-rich tracts occupy residues T21–S51 and T58–A112. The tract at residues T21–S224 is disordered. O-linked (GalNAc...) serine glycans are attached at residues S29 and S35. An O-linked (GalNAc...) threonine glycan is attached at T36. S37, S41, and S42 each carry an O-linked (GalNAc...) serine glycan. 2 O-linked (GalNAc...) threonine glycosylation sites follow: T46 and T47. S48 carries an O-linked (GalNAc...) serine glycan. O-linked (GalNAc...) threonine glycosylation is found at T50, T58, and T69. Residues S99 and S103 are each glycosylated (O-linked (GalNAc...) serine). 2 O-linked (GalNAc...) threonine glycosylation sites follow: T109 and T113. A glycan (O-linked (GalNAc...) serine) is linked at S114. Composition is skewed to polar residues over residues T121–T164 and A172–T182. O-linked (GalNAc...) threonine glycans are attached at residues T136, T137, T173, and T178. The segment covering T196–S211 has biased composition (low complexity). A compositionally biased stretch (polar residues) spans L212–S224. N239 is a glycosylation site (N-linked (GlcNAc...) asparagine). Residues G254–L276 traverse the membrane as a helical segment. At W277–P400 the chain is on the cytoplasmic side. The required for interaction with EZR, MSN and RDX and for co-localization to microvilli stretch occupies residues R278–Q308. The Nuclear localization signal signature appears at K282–R296. S291 bears the Phosphoserine mark. The span at G320 to D332 shows a compositional bias: gly residues. The tract at residues G320–P400 is disordered. S336 carries the post-translational modification Phosphoserine. T341 carries the phosphothreonine modification. S351 carries the phosphoserine modification. S355 carries the phosphoserine; by PKC/PRKCQ modification. 2 positions are modified to phosphoserine: S368 and S379.

As to quaternary structure, interacts with SIGLEC1. Monomer. Interacts with CTNNB1. Interacts with RDX (via FERM domain), EZR and MSN. In terms of processing, glycosylated; has a high content of sialic acid and O-linked carbohydrate structures. Phosphorylation at Ser-355 is regulated by chemokines, requires its association with ERM proteins (EZR, RDX and MSN) and is essential for its function in the regulation of T-cell trafficking to lymph nodes. Post-translationally, has a high content of sialic acid and O-linked carbohydrate structures. In terms of processing, cleavage by CTSG releases its extracellular domain and triggers its intramembrane proteolysis by gamma-secretase releasing the CD43 cytoplasmic tail chain (CD43-ct) which translocates to the nucleus. Sumoylated. Cell surface of thymocytes, T-lymphocytes, neutrophils, plasma cells and myelomas.

It localises to the membrane. The protein localises to the cell projection. Its subcellular location is the microvillus. The protein resides in the uropodium. It is found in the nucleus. It localises to the PML body. Functionally, predominant cell surface sialoprotein of leukocytes which regulates multiple T-cell functions, including T-cell activation, proliferation, differentiation, trafficking and migration. Positively regulates T-cell trafficking to lymph-nodes via its association with ERM proteins (EZR, RDX and MSN). Negatively regulates Th2 cell differentiation and predisposes the differentiation of T-cells towards a Th1 lineage commitment. Promotes the expression of IFN-gamma by T-cells during T-cell receptor (TCR) activation of naive cells and induces the expression of IFN-gamma by CD4(+) T-cells and to a lesser extent by CD8(+) T-cells. Plays a role in preparing T-cells for cytokine sensing and differentiation into effector cells by inducing the expression of cytokine receptors IFNGR and IL4R, promoting IFNGR and IL4R signaling and by mediating the clustering of IFNGR with TCR. Acts as a major E-selectin ligand responsible for Th17 cell rolling on activated vasculature and recruitment during inflammation. Mediates Th17 cells, but not Th1 cells, adhesion to E-selectin. Acts as a T-cell counter-receptor for SIGLEC1. In terms of biological role, protects cells from apoptotic signals, promoting cell survival. The sequence is that of Leukosialin (SPN) from Homo sapiens (Human).